The primary structure comprises 89 residues: MDGIKYAVVTDKSLRLVSKNQYTFNVESGSTRTEIKSWVELFFGVKVIAMNSHRLPGKRRRMGHTMHYRRMIITLQPGYSIPSLINLII.

The protein belongs to the universal ribosomal protein uL23 family. As to quaternary structure, part of the 50S ribosomal subunit.

The protein localises to the plastid. It is found in the chloroplast. Its function is as follows. Binds to 23S rRNA. This chain is Large ribosomal subunit protein uL23cz/uL23cy (rpl23-A), found in Pelargonium hortorum (Common geranium).